Consider the following 669-residue polypeptide: MSALLSLCFVLPLAAPGHGTQGWEPCTDLRPLDILAEVVPSDGATSGIRIVQVHGARGLQLSVAAPRTMSFPASRIFSQCDLFPEEFSIVVTLRVPNLPPKRNEYLLTVVAEESDLLLLGLRLSPAQLHFLFLREDTAGAWQTRVSFRSPALVDGRWHTLVLAVSAGVFSLTTDCGLPVDIMADVPFPATLSVKGARFFVGSRRRAKGLFMGLVRQLVLLPGSDATPRLCPSRNAPLAVLSIPRVLQALTGKPEDNEVLKYPYETNIRVTLGPQPPCTEVEDAQFWFDASRKGLYLCVGNEWVSVLAAKERLDYVEEHQNLSTNSETLGIEVFRIPQVGLFVATANRKATSAVYKWTEEKFVSYQNIPTHQAQAWRHFTIGKKIFLAVANFEPDEKGQEFSVIYKWSHRKLKFTPYQSIATHSARDWEAFEVDGEHFLAVANHREGDNHNIDSVIYKWNPATRLFEANQTIATSGAYDWEFFSVGPYSFLVVANTFNGTSTKVHSHLYIRLLGSFQLFQSFPTFGAADWEVFQIGERIFLAVANSHSYDVEMQVQNDSYVINSVIYELNVTAQAFVKFQDILTCSALDWEFFSVGEDYFLVVANSFDGRTFSVNSIIYRWQGYEGFVAVHSLPTVGCRDWEAFSTTAGAYLIYSSAKEPLSRVLRLRTR.

A signal peptide spans 1–19; that stretch reads MSALLSLCFVLPLAAPGHG. Residues 58–277 enclose the Laminin G-like domain; sequence GLQLSVAAPR…RVTLGPQPPC (220 aa). EAR repeat units lie at residues 313–358, 360–408, 412–460, 464–506, 514–570, 574–622, and 625–668; these read DYVE…KWTE, KFVS…KWSH, KFTP…KWNP, LFEA…VHSH, SFQL…ELNV, AFVK…RWQG, and GFVA…RLRT. N-linked (GlcNAc...) asparagine glycosylation occurs at Asn320. N-linked (GlcNAc...) asparagine glycans are attached at residues Asn468, Asn497, Asn556, and Asn569.

It localises to the secreted. It is found in the cell surface. The protein resides in the cell projection. The protein localises to the stereocilium. In terms of biological role, plays a critical role in tooth and hair follicle morphogenesis through regulation of the Notch signaling pathway. May play a role in development or function of the auditory system. This is Thrombospondin-type laminin G domain and EAR repeat-containing protein (TSPEAR) from Homo sapiens (Human).